The sequence spans 1818 residues: Unconventional myosin-Vb (1818 aa).

Residues 8 to 60 (TRYTRVWIPDPDEVWRSAELTKDYKEGDKSLQLRLEDDTILEYPVDVQNNQVP) form the Myosin N-terminal SH3-like domain. Positions 21 to 40 (VWRSAELTKDYKEGDKSLQL) are requires for interaction with LIMA1. The region spanning 69-762 (VGENDLTALS…QVAYLEKLRA (694 aa)) is the Myosin motor domain. 163 to 170 (GESGAGKT) is an ATP binding site. The segment at 641-663 (LNLLMETLNATTPHYVRCIKPND) is actin-binding. IQ domains follow at residues 765 to 794 (FREATIMIQKSVRGWLQRVKYRRLRAATLS), 788 to 817 (LRAATLSLQRFCRGYLARRLAEHLRRTRAA), 813 to 842 (RTRAAIVFQKQYRMLKARRAYRRVCRATVI), 836 to 865 (VCRATVIIQSFTRAMFVRRNYRQVLMEHKA), 861 to 890 (MEHKATIIQKYARGWMARKRFLRERDAAIV), and 884 to 913 (ERDAAIVIQCAFRRLKARQELKALKIEARS). Disordered regions lie at residues 1086-1120 (LRDEQTPGHRKNPSNQSSLESDSNYPSISTSEIGD) and 1161-1188 (QAQLEKGQQDSKKGQVEQQNNGLDVDQD). The segment covering 1098–1118 (PSNQSSLESDSNYPSISTSEI) has biased composition (polar residues). Coiled-coil stretches lie at residues 1140–1261 (MTVF…LILR) and 1313–1415 (LEAQ…ALAQ). At Ser-1416 the chain carries Phosphoserine. A Dilute domain is found at 1496-1773 (SSTINGIKKV…IRTIQAQLQE (278 aa)).

This sequence belongs to the TRAFAC class myosin-kinesin ATPase superfamily. Myosin family. As to quaternary structure, component of the CART complex, at least composed of ACTN4, HGS/HRS, MYO5B and TRIM3. Interacts with RAB11FIP2. Interacts with RAB11A and RAB8A. Found in a complex with CFTR and RAB11A. Interacts with NPC1L1. Interacts with LIMA1.

Its subcellular location is the cytoplasm. Its function is as follows. May be involved in vesicular trafficking via its association with the CART complex. The CART complex is necessary for efficient transferrin receptor recycling but not for EGFR degradation. Required in a complex with RAB11A and RAB11FIP2 for the transport of NPC1L1 to the plasma membrane. Together with RAB11A participates in CFTR trafficking to the plasma membrane and TF (transferrin) recycling in nonpolarized cells. Together with RAB11A and RAB8A participates in epithelial cell polarization. Together with RAB25 regulates transcytosis. Required for proper localization of bile salt export pump ABCB11 at the apical/canalicular plasma membrane of hepatocytes. In Mus musculus (Mouse), this protein is Unconventional myosin-Vb (Myo5b).